Consider the following 218-residue polypeptide: uncharacterized protein (218 aa).

Residues Met-184 to Ala-202 are compositionally biased toward basic and acidic residues. The segment at Met-184 to Lys-218 is disordered. Residues Gln-205–Lys-218 are compositionally biased toward basic residues.

This is an uncharacterized protein from Mycoplasma pneumoniae (strain ATCC 29342 / M129 / Subtype 1) (Mycoplasmoides pneumoniae).